We begin with the raw amino-acid sequence, 427 residues long: MEPCDLLIHSATQLVTCAGPPGLRRGPAMRELGVIRDGAVAIRGSTIVAVGPGTDVRRRFRASHEIDARGRAVCPGLVDCHTHIVYAGDRVEEFEQRCAGATYQEIMAAGGGILRTMRLTRAATTTELVHAALPRLRQMLSFGTTTAEVKTGYGLERDAELRQLAAIALLDAAQPIELVPTFLAAHAVPPEFTGRADDYIDLVVESMLPLARDWYAVSSFAARAIPLFVDVFCERGAFDVAQSRRVLDAARSLGLPRKAHVDEFVELGGLAMALELGATSVDHLDVTGPSAFTALAASSTVAVLLPLVSLNLGLSHFAAARAMIDAGVAVALSTDANPGSAPSLSLPLTMAIACRYLRMLPAETLIATTVNAAYAIGRGGHVGALMPGMQADLLILAADDYRWLMYELGGMPVAQVIKRGQVVVTNE.

The Fe(3+) site is built by histidine 81 and histidine 83. 2 residues coordinate Zn(2+): histidine 81 and histidine 83. 4-imidazolone-5-propanoate-binding residues include arginine 90, tyrosine 153, and histidine 186. An N-formimidoyl-L-glutamate-binding site is contributed by tyrosine 153. Position 260 (histidine 260) interacts with Fe(3+). A Zn(2+)-binding site is contributed by histidine 260. Residue glutamate 263 participates in 4-imidazolone-5-propanoate binding. Aspartate 335 contacts Fe(3+). Aspartate 335 serves as a coordination point for Zn(2+). Residues asparagine 337 and glycine 339 each contribute to the N-formimidoyl-L-glutamate site. Residue serine 340 participates in 4-imidazolone-5-propanoate binding.

This sequence belongs to the metallo-dependent hydrolases superfamily. HutI family. The cofactor is Zn(2+). Fe(3+) serves as cofactor.

Its subcellular location is the cytoplasm. It catalyses the reaction 4-imidazolone-5-propanoate + H2O = N-formimidoyl-L-glutamate. It functions in the pathway amino-acid degradation; L-histidine degradation into L-glutamate; N-formimidoyl-L-glutamate from L-histidine: step 3/3. Functionally, catalyzes the hydrolytic cleavage of the carbon-nitrogen bond in imidazolone-5-propanoate to yield N-formimidoyl-L-glutamate. It is the third step in the universal histidine degradation pathway. This Chloroflexus aggregans (strain MD-66 / DSM 9485) protein is Imidazolonepropionase.